The sequence spans 695 residues: DUF724 domain-containing protein 3 (695 aa).

The disordered stretch occupies residues isoleucine 376–aspartate 464. Over residues glutamine 384–lysine 402 the composition is skewed to basic and acidic residues. Positions asparagine 434–threonine 459 are enriched in polar residues. The region spanning proline 509–proline 694 is the DUF724 domain. Residues valine 614 to glutamate 684 adopt a coiled-coil conformation.

As to quaternary structure, homodimer.

In terms of biological role, may be involved in the polar growth of plant cells via transportation of RNAs. The chain is DUF724 domain-containing protein 3 from Arabidopsis thaliana (Mouse-ear cress).